The following is a 317-amino-acid chain: Putative HTH-type transcriptional regulatory protein Mlab_0160 (317 aa).

An HTH cro/C1-type domain is found at 132 to 189; it reads LRTLREEQAMSLGDLAHALGVSRRTISKYEGGMGTTLEMAMRLEEFFNDDIVMPIDLL. Positions 143-162 form a DNA-binding region, H-T-H motif; sequence LGDLAHALGVSRRTISKYEG. The interval 199–219 is disordered; the sequence is VPASLASGHNPESDAQPKRPE. Residues 209–219 are compositionally biased toward basic and acidic residues; it reads PESDAQPKRPE.

In Methanocorpusculum labreanum (strain ATCC 43576 / DSM 4855 / Z), this protein is Putative HTH-type transcriptional regulatory protein Mlab_0160.